Reading from the N-terminus, the 517-residue chain is Putative thymidine phosphorylase (517 aa).

The protein belongs to the thymidine/pyrimidine-nucleoside phosphorylase family. Type 2 subfamily.

The enzyme catalyses thymidine + phosphate = 2-deoxy-alpha-D-ribose 1-phosphate + thymine. In Legionella pneumophila (strain Corby), this protein is Putative thymidine phosphorylase.